The chain runs to 265 residues: 5'-nucleotidase SurE (265 aa).

Residues Asp-8, Asp-9, Ser-40, and Asn-98 each coordinate a divalent metal cation.

It belongs to the SurE nucleotidase family. Requires a divalent metal cation as cofactor.

It localises to the cytoplasm. It catalyses the reaction a ribonucleoside 5'-phosphate + H2O = a ribonucleoside + phosphate. Nucleotidase that shows phosphatase activity on nucleoside 5'-monophosphates. The polypeptide is 5'-nucleotidase SurE (Trichormus variabilis (strain ATCC 29413 / PCC 7937) (Anabaena variabilis)).